Here is a 285-residue protein sequence, read N- to C-terminus: Phosphatidylglycerol--prolipoprotein diacylglyceryl transferase (285 aa).

The next 4 membrane-spanning stretches (helical) occupy residues 30-50, 67-87, 103-123, and 129-149; these read LEIRWYALSYVFGILFAHWHI, LMLWAVIGIILGGRTAYILLY, WHGGMSMHGGYVGCIIAVSIV, and VRVMPVLDLCACAAPLGLFLG. Position 150 (arginine 150) interacts with a 1,2-diacyl-sn-glycero-3-phospho-(1'-sn-glycerol). A run of 3 helical transmembrane segments spans residues 184–204, 213–233, and 252–272; these read SQVYEAMLEGLLPLLFMSILA, FGVLSHMFGAWYGIVRCAVEF, and GQVLSAPIAVVGIFMLVLTVL.

Belongs to the Lgt family.

It is found in the cell inner membrane. It catalyses the reaction L-cysteinyl-[prolipoprotein] + a 1,2-diacyl-sn-glycero-3-phospho-(1'-sn-glycerol) = an S-1,2-diacyl-sn-glyceryl-L-cysteinyl-[prolipoprotein] + sn-glycerol 1-phosphate + H(+). It functions in the pathway protein modification; lipoprotein biosynthesis (diacylglyceryl transfer). Functionally, catalyzes the transfer of the diacylglyceryl group from phosphatidylglycerol to the sulfhydryl group of the N-terminal cysteine of a prolipoprotein, the first step in the formation of mature lipoproteins. The sequence is that of Phosphatidylglycerol--prolipoprotein diacylglyceryl transferase from Anaplasma marginale (strain Florida).